The primary structure comprises 240 residues: SURF1-like protein (240 aa).

2 helical membrane passes run 7-23 (VFITFTILISLGFWQLS) and 201-219 (YALTWFGLAISLIVIYVIY).

This sequence belongs to the SURF1 family.

Its subcellular location is the cell membrane. In Rickettsia conorii (strain ATCC VR-613 / Malish 7), this protein is SURF1-like protein.